A 72-amino-acid polypeptide reads, in one-letter code: SRY-related protein MG42 (72 aa).

The HMG box DNA-binding region spans Val1–Lys69.

The protein localises to the nucleus. The protein is SRY-related protein MG42 of Tarentola mauritanica (Common wall gecko).